The following is a 708-amino-acid chain: Elongation factor G (708 aa).

The tr-type G domain maps to K8 to M290. GTP-binding positions include A17–T24, D88–H92, and N142–D145.

This sequence belongs to the TRAFAC class translation factor GTPase superfamily. Classic translation factor GTPase family. EF-G/EF-2 subfamily.

It localises to the cytoplasm. Functionally, catalyzes the GTP-dependent ribosomal translocation step during translation elongation. During this step, the ribosome changes from the pre-translocational (PRE) to the post-translocational (POST) state as the newly formed A-site-bound peptidyl-tRNA and P-site-bound deacylated tRNA move to the P and E sites, respectively. Catalyzes the coordinated movement of the two tRNA molecules, the mRNA and conformational changes in the ribosome. The polypeptide is Elongation factor G (Psychrobacter cryohalolentis (strain ATCC BAA-1226 / DSM 17306 / VKM B-2378 / K5)).